The sequence spans 176 residues: Ribosome rescue factor SmrB (176 aa).

The 76-residue stretch at leucine 98 to histidine 173 folds into the Smr domain.

Belongs to the SmrB family. Associates with collided ribosomes, but not with correctly translating polysomes.

Functionally, acts as a ribosome collision sensor. Detects stalled/collided disomes (pairs of ribosomes where the leading ribosome is stalled and a second ribosome has collided with it) and endonucleolytically cleaves mRNA at the 5' boundary of the stalled ribosome. Stalled/collided disomes form a new interface (primarily via the 30S subunits) that binds SmrB. Cleaved mRNA becomes available for tmRNA ligation, leading to ribosomal subunit dissociation and rescue of stalled ribosomes. In Buchnera aphidicola subsp. Baizongia pistaciae (strain Bp), this protein is Ribosome rescue factor SmrB.